A 51-amino-acid chain; its full sequence is Sperm protamine P1 (51 aa).

Intrachain disulfides connect Cys-7–Cys-15 and Cys-38–Cys-48.

Belongs to the protamine P1 family. As to quaternary structure, cross-linked by interchain disulfide bonds around the DNA-helix. In terms of processing, phosphorylated by SRPK1. As to expression, testis.

It is found in the nucleus. It localises to the chromosome. Protamines substitute for histones in the chromatin of sperm during the haploid phase of spermatogenesis. They compact sperm DNA into a highly condensed, stable and inactive complex. This is Sperm protamine P1 (Prm1) from Mus musculus (Mouse).